The following is a 291-amino-acid chain: 4-diphosphocytidyl-2-C-methyl-D-erythritol kinase (291 aa).

K10 is an active-site residue. 94-104 is a binding site for ATP; that stretch reads PVSAGLAGGSS. D136 is a catalytic residue.

This sequence belongs to the GHMP kinase family. IspE subfamily.

The catalysed reaction is 4-CDP-2-C-methyl-D-erythritol + ATP = 4-CDP-2-C-methyl-D-erythritol 2-phosphate + ADP + H(+). It functions in the pathway isoprenoid biosynthesis; isopentenyl diphosphate biosynthesis via DXP pathway; isopentenyl diphosphate from 1-deoxy-D-xylulose 5-phosphate: step 3/6. Catalyzes the phosphorylation of the position 2 hydroxy group of 4-diphosphocytidyl-2C-methyl-D-erythritol. This chain is 4-diphosphocytidyl-2-C-methyl-D-erythritol kinase, found in Listeria welshimeri serovar 6b (strain ATCC 35897 / DSM 20650 / CCUG 15529 / CIP 8149 / NCTC 11857 / SLCC 5334 / V8).